The sequence spans 495 residues: T-cell surface glycoprotein CD5 (495 aa).

The signal sequence occupies residues 1-24 (MPMGSLQPLATLYLLGMLVASCLG). The Extracellular segment spans residues 25–372 (RLSWYDPDFQ…VFVTCQDPNP (348 aa)). The SRCR 1 domain occupies 35 to 133 (ARLTRSNSKC…MCHSLGLTCL (99 aa)). 4 disulfide bridges follow: cysteine 44–cysteine 86, cysteine 60–cysteine 125, cysteine 81–cysteine 132, and cysteine 107–cysteine 117. A glycan (N-linked (GlcNAc...) asparagine) is linked at asparagine 116. The interval 136-155 (QKTTPPTTRPPPTTTPEPTA) is disordered. Positions 142–155 (TTRPPPTTTPEPTA) are enriched in pro residues. SRCR domains are found at residues 159–268 (LQLV…LLCS) and 276–368 (SRLV…VTCQ). 6 disulfides stabilise this stretch: cysteine 201–cysteine 267, cysteine 244–cysteine 250, cysteine 285–cysteine 321, cysteine 301–cysteine 360, cysteine 316–cysteine 367, and cysteine 342–cysteine 350. N-linked (GlcNAc...) asparagine glycosylation is present at asparagine 241. A helical transmembrane segment spans residues 373 to 402 (AGLAAGTVASIILALVLLVVLLVVCGPLAY). At 403–495 (KKLVKKFRQK…DYDLHGAQRL (93 aa)) the chain is on the cytoplasmic side. Disordered stretches follow at residues 436 to 460 (TVRS…PRNS) and 473 to 495 (HRSS…AQRL). Serine 439 bears the Phosphoserine mark. At tyrosine 453 the chain carries Phosphotyrosine. Serine 460, serine 483, and serine 485 each carry phosphoserine. Over residues 475–484 (SSMQPDNSSD) the composition is skewed to polar residues.

In terms of assembly, interacts with CD72/LYB-2. Interacts with PTPN6/SHP-1. Interacts with CBL. Interacts with CD5L. Interacts with CD3Z/CD247. Phosphorylated on serine, threonine and tyrosine residues following TCR stimulation. Phosphorylated by LCK on Tyr-453 and Tyr-487 upon TCR engagement.

Its subcellular location is the cell membrane. Its function is as follows. Lymphoid-specific receptor expressed by all T-cells and in a subset of B-cells known as B1a cells. Plays a role in the regulation of TCR and BCR signaling, thymocyte selection, T-cell effector differentiation and immune tolerance. Acts by interacting with several ligands expressed on B-cells such as CD5L or CD72 and thereby plays an important role in contact-mediated, T-dependent B-cell activation and in the maintenance of regulatory T and B-cell homeostasis. Functions as a negative regulator of TCR signaling during thymocyte development by associating with several signaling proteins including LCK, CD3Z chain, PI3K or CBL. Mechanistically, co-engagement of CD3 with CD5 enhances phosphorylated CBL recruitment leading to increased VAV1 phosphorylation and degradation. Modulates B-cell biology through ERK1/2 activation in a Ca(2+)-dependent pathway via the non-selective Ca(2+) channel TRPC1, leading to IL-10 production. This Homo sapiens (Human) protein is T-cell surface glycoprotein CD5 (CD5).